Consider the following 79-residue polypeptide: Acyl carrier protein (79 aa).

The Carrier domain occupies 4-79; the sequence is AEIKDKVYDI…QAIDYIVNKK (76 aa). Serine 39 bears the O-(pantetheine 4'-phosphoryl)serine mark.

Belongs to the acyl carrier protein (ACP) family. 4'-phosphopantetheine is transferred from CoA to a specific serine of apo-ACP by AcpS. This modification is essential for activity because fatty acids are bound in thioester linkage to the sulfhydryl of the prosthetic group.

The protein localises to the cytoplasm. It participates in lipid metabolism; fatty acid biosynthesis. Functionally, carrier of the growing fatty acid chain in fatty acid biosynthesis. This Chlorobaculum parvum (strain DSM 263 / NCIMB 8327) (Chlorobium vibrioforme subsp. thiosulfatophilum) protein is Acyl carrier protein.